We begin with the raw amino-acid sequence, 179 residues long: Large ribosomal subunit protein uL5 (179 aa).

Belongs to the universal ribosomal protein uL5 family. As to quaternary structure, part of the 50S ribosomal subunit; part of the 5S rRNA/L5/L18/L25 subcomplex. Contacts the 5S rRNA and the P site tRNA. Forms a bridge to the 30S subunit in the 70S ribosome.

This is one of the proteins that bind and probably mediate the attachment of the 5S RNA into the large ribosomal subunit, where it forms part of the central protuberance. In the 70S ribosome it contacts protein S13 of the 30S subunit (bridge B1b), connecting the 2 subunits; this bridge is implicated in subunit movement. Contacts the P site tRNA; the 5S rRNA and some of its associated proteins might help stabilize positioning of ribosome-bound tRNAs. The polypeptide is Large ribosomal subunit protein uL5 (Thioalkalivibrio sulfidiphilus (strain HL-EbGR7)).